A 148-amino-acid chain; its full sequence is UPF0251 protein Cbei_2962 (148 aa).

It belongs to the UPF0251 family.

In Clostridium beijerinckii (strain ATCC 51743 / NCIMB 8052) (Clostridium acetobutylicum), this protein is UPF0251 protein Cbei_2962.